The following is a 490-amino-acid chain: Cobyric acid synthase (490 aa).

One can recognise a GATase cobBQ-type domain in the interval 252 to 439 (RLKVVVPVLP…LHGLFESTAA (188 aa)). Cysteine 333 functions as the Nucleophile in the catalytic mechanism. Residue histidine 431 is part of the active site.

This sequence belongs to the CobB/CobQ family. CobQ subfamily.

It participates in cofactor biosynthesis; adenosylcobalamin biosynthesis. Catalyzes amidations at positions B, D, E, and G on adenosylcobyrinic A,C-diamide. NH(2) groups are provided by glutamine, and one molecule of ATP is hydrogenolyzed for each amidation. The chain is Cobyric acid synthase from Pseudomonas aeruginosa (strain UCBPP-PA14).